Here is a 112-residue protein sequence, read N- to C-terminus: Nitrogenase-stabilizing/protective protein NifW (112 aa).

This sequence belongs to the NifW family. Homotrimer; associates with NifD.

Its function is as follows. May protect the nitrogenase Fe-Mo protein from oxidative damage. The protein is Nitrogenase-stabilizing/protective protein NifW of Burkholderia vietnamiensis (strain G4 / LMG 22486) (Burkholderia cepacia (strain R1808)).